Here is an 87-residue protein sequence, read N- to C-terminus: uncharacterized protein (87 aa).

An N-terminal signal peptide occupies residues 1–19 (MLVLLVAVLVTAVYAFVHA). The chain crosses the membrane as a helical span at residues 39–59 (LVILGAAVALASILYPVLGVL).

This sequence to M.leprae ML2453.

Its subcellular location is the membrane. This is an uncharacterized protein from Mycobacterium bovis (strain ATCC BAA-935 / AF2122/97).